The following is a 272-amino-acid chain: Proteasome subunit beta (272 aa).

Positions 1–47 (MSTGGDRLPEAFLRPGSSSFVEFLREVAPQSHPEHARPAGAGDVVHA) are cleaved as a propeptide — removed in mature form; by autocatalysis. The Nucleophile role is filled by Thr-48.

Belongs to the peptidase T1B family. The 20S proteasome core is composed of 14 alpha and 14 beta subunits that assemble into four stacked heptameric rings, resulting in a barrel-shaped structure. The two inner rings, each composed of seven catalytic beta subunits, are sandwiched by two outer rings, each composed of seven alpha subunits. The catalytic chamber with the active sites is on the inside of the barrel. Has a gated structure, the ends of the cylinder being occluded by the N-termini of the alpha-subunits. Is capped by the proteasome-associated ATPase, ARC.

The protein localises to the cytoplasm. The enzyme catalyses Cleavage of peptide bonds with very broad specificity.. It functions in the pathway protein degradation; proteasomal Pup-dependent pathway. With respect to regulation, the formation of the proteasomal ATPase ARC-20S proteasome complex, likely via the docking of the C-termini of ARC into the intersubunit pockets in the alpha-rings, may trigger opening of the gate for substrate entry. Interconversion between the open-gate and close-gate conformations leads to a dynamic regulation of the 20S proteasome proteolysis activity. Component of the proteasome core, a large protease complex with broad specificity involved in protein degradation. The chain is Proteasome subunit beta from Beutenbergia cavernae (strain ATCC BAA-8 / DSM 12333 / CCUG 43141 / JCM 11478 / NBRC 16432 / NCIMB 13614 / HKI 0122).